Here is a 364-residue protein sequence, read N- to C-terminus: Fructose-bisphosphate aldolase B (364 aa).

At alanine 2 the chain carries N-acetylalanine. Position 13 is an N6-succinyllysine (lysine 13). Serine 36 carries the post-translational modification Phosphoserine. The residue at position 39 (threonine 39) is a Phosphothreonine. Residue arginine 43 coordinates beta-D-fructose 1,6-bisphosphate. Serine 89 is subject to Phosphoserine. Threonine 119 is modified (phosphothreonine). Lysine 121 is modified (N6-succinyllysine). Serine 132 is modified (phosphoserine). Residue glutamate 188 is the Proton acceptor of the active site. The active-site Schiff-base intermediate with dihydroxyacetone-P is lysine 230. 4 positions are modified to phosphoserine: serine 272, serine 276, serine 299, and serine 301. 272 to 274 contacts beta-D-fructose 1,6-bisphosphate; sequence SGG. A beta-D-fructose 1,6-bisphosphate-binding site is contributed by arginine 304. Serine 309 carries the phosphoserine modification. At lysine 317 the chain carries N6-succinyllysine.

The protein belongs to the class I fructose-bisphosphate aldolase family. As to quaternary structure, homotetramer. Interacts with BBS1, BBS2, BBS4 and BBS7. Forms a ternary complex with G6PD and TP53; this interaction is direct.

It localises to the cytoplasm. The protein localises to the cytosol. The protein resides in the cytoskeleton. It is found in the microtubule organizing center. Its subcellular location is the centrosome. It localises to the centriolar satellite. The enzyme catalyses beta-D-fructose 1,6-bisphosphate = D-glyceraldehyde 3-phosphate + dihydroxyacetone phosphate. It carries out the reaction beta-D-fructose 1-phosphate = D-glyceraldehyde + dihydroxyacetone phosphate. It functions in the pathway carbohydrate degradation; glycolysis; D-glyceraldehyde 3-phosphate and glycerone phosphate from D-glucose: step 4/4. Its pathway is carbohydrate biosynthesis; gluconeogenesis. It participates in carbohydrate metabolism; fructose metabolism. Catalyzes the aldol cleavage of fructose 1,6-biphosphate to form two triosephosphates dihydroxyacetone phosphate and D-glyceraldehyde 3-phosphate in glycolysis as well as the reverse stereospecific aldol addition reaction in gluconeogenesis. In fructolysis, metabolizes fructose 1-phosphate derived from the phosphorylation of dietary fructose by fructokinase into dihydroxyacetone phosphate and D-glyceraldehyde. Acts as an adapter independently of its enzymatic activity, exerts a tumor suppressor role by stabilizing the ternary complex with G6PD and TP53 to inhibit G6PD activity and keep oxidative pentose phosphate metabolism in check. In Homo sapiens (Human), this protein is Fructose-bisphosphate aldolase B.